Consider the following 217-residue polypeptide: Octanoyltransferase (217 aa).

A BPL/LPL catalytic domain is found at S32 to H207. Substrate-binding positions include R71–H78, S138–G140, and G151–A153. The active-site Acyl-thioester intermediate is the C169.

This sequence belongs to the LipB family.

The protein resides in the cytoplasm. The enzyme catalyses octanoyl-[ACP] + L-lysyl-[protein] = N(6)-octanoyl-L-lysyl-[protein] + holo-[ACP] + H(+). It functions in the pathway protein modification; protein lipoylation via endogenous pathway; protein N(6)-(lipoyl)lysine from octanoyl-[acyl-carrier-protein]: step 1/2. Its function is as follows. Catalyzes the transfer of endogenously produced octanoic acid from octanoyl-acyl-carrier-protein onto the lipoyl domains of lipoate-dependent enzymes. Lipoyl-ACP can also act as a substrate although octanoyl-ACP is likely to be the physiological substrate. In Shewanella baltica (strain OS155 / ATCC BAA-1091), this protein is Octanoyltransferase.